We begin with the raw amino-acid sequence, 2075 residues long: Autophagy-related protein 2 homolog B (2075 aa).

The Chorein N-terminal domain maps to 13 to 107 (ACRYLLQRYL…LEMVFRPRPR (95 aa)). Phosphoserine is present on residues Ser255, Ser379, Ser496, Ser839, Ser885, Ser898, and Ser1007. Residue Tyr1011 is modified to Phosphotyrosine. 2 positions are modified to phosphoserine: Ser1015 and Ser1017. At Thr1021 the chain carries Phosphothreonine. The disordered stretch occupies residues 1373-1403 (KAEMKPGVPQRKPKVDSSARSSSHGPVLPEA). Ser1525 bears the Phosphoserine mark. 3 disordered regions span residues 1570 to 1593 (TSPA…GRHT), 1759 to 1792 (EPNL…EDVS), and 2055 to 2075 (RNQI…HGED). Polar residues predominate over residues 1578–1587 (PHSSPSQTPT). Positions 2058–2075 (IRPDVRQDESQKWRHGED) are enriched in basic and acidic residues.

It belongs to the ATG2 family. As to quaternary structure, interacts with WDR45/WIPI4.

It localises to the preautophagosomal structure membrane. Its subcellular location is the lipid droplet. The protein localises to the endoplasmic reticulum membrane. It carries out the reaction a 1,2-diacyl-sn-glycero-3-phospho-L-serine(in) = a 1,2-diacyl-sn-glycero-3-phospho-L-serine(out). It catalyses the reaction a 1,2-diacyl-sn-glycero-3-phosphoethanolamine(in) = a 1,2-diacyl-sn-glycero-3-phosphoethanolamine(out). In terms of biological role, lipid transfer protein required for both autophagosome formation and regulation of lipid droplet morphology and dispersion. Tethers the edge of the isolation membrane (IM) to the endoplasmic reticulum (ER) and mediates direct lipid transfer from ER to IM for IM expansion. Binds to the ER exit site (ERES), which is the membrane source for autophagosome formation, and extracts phospholipids from the membrane source and transfers them to ATG9 (ATG9A or ATG9B) to the IM for membrane expansion. Lipid transfer activity is enhanced by WDR45/WIPI4, which promotes ATG2B-association with phosphatidylinositol 3-monophosphate (PI3P)-containing membranes. The sequence is that of Autophagy-related protein 2 homolog B from Mus musculus (Mouse).